A 144-amino-acid polypeptide reads, in one-letter code: Antigenic protein SchS21 (144 aa).

Asparagine 36 carries an N-linked (GlcNAc...) asparagine glycan. Residues valine 91–glycine 105 are igE-binding epitope.

Homodimer. Requires Mg(2+) as cofactor.

The protein resides in the secreted. Has exodeoxyribonuclease activity with lambda-DNA and salmon testes dsDNA. No activity with circular plasmid DNA. The physiological role of this enzyme may be to degrade environmental DNA, and thus mobilize nitrogen for uptake. This Stachybotrys chartarum (Toxic black mold) protein is Antigenic protein SchS21.